Reading from the N-terminus, the 513-residue chain is 2-isopropylmalate synthase (513 aa).

Positions 5–268 (LIIFDTTLRD…DLRVDTSQIV (264 aa)) constitute a Pyruvate carboxyltransferase domain. Positions 14, 202, 204, and 239 each coordinate Mn(2+). Positions 394–513 (RLLALSQHSE…SKAERVAAQG (120 aa)) are regulatory domain.

It belongs to the alpha-IPM synthase/homocitrate synthase family. LeuA type 1 subfamily. In terms of assembly, homodimer. It depends on Mn(2+) as a cofactor.

The protein localises to the cytoplasm. The enzyme catalyses 3-methyl-2-oxobutanoate + acetyl-CoA + H2O = (2S)-2-isopropylmalate + CoA + H(+). It functions in the pathway amino-acid biosynthesis; L-leucine biosynthesis; L-leucine from 3-methyl-2-oxobutanoate: step 1/4. Functionally, catalyzes the condensation of the acetyl group of acetyl-CoA with 3-methyl-2-oxobutanoate (2-ketoisovalerate) to form 3-carboxy-3-hydroxy-4-methylpentanoate (2-isopropylmalate). The chain is 2-isopropylmalate synthase from Leptothrix cholodnii (strain ATCC 51168 / LMG 8142 / SP-6) (Leptothrix discophora (strain SP-6)).